Here is a 440-residue protein sequence, read N- to C-terminus: Transposon Ty1-MR1 Gag polyprotein (440 aa).

Polar residues-rich tracts occupy residues 1 to 31 (MESQ…TTQD), 46 to 60 (VSTQ…TPLS), and 137 to 168 (VGTH…TNQH). 3 disordered regions span residues 1-88 (MESQ…YPQQ), 137-174 (VGTH…PPPI), and 350-424 (QQES…TTEP). The segment at 299–401 (NNGIPINNKV…NSQSRTARAH (103 aa)) is RNA-binding. The span at 363 to 372 (SPSDEKKDSR) shows a compositional bias: basic and acidic residues. Polar residues predominate over residues 373 to 411 (TYTNTTKPKSITRNSQKPNNSQSRTARAHNVSTFNNSPG).

Homotrimer.

Its subcellular location is the cytoplasm. In terms of biological role, capsid protein (CA) is the structural component of the virus-like particle (VLP), forming the shell that encapsulates the retrotransposons dimeric RNA genome. The particles are assembled from trimer-clustered units and there are holes in the capsid shells that allow for the diffusion of macromolecules. CA also has nucleocapsid-like chaperone activity, promoting primer tRNA(i)-Met annealing to the multipartite primer-binding site (PBS), dimerization of Ty1 RNA and initiation of reverse transcription. This Saccharomyces cerevisiae (strain ATCC 204508 / S288c) (Baker's yeast) protein is Transposon Ty1-MR1 Gag polyprotein (TY1A-MR1).